Reading from the N-terminus, the 703-residue chain is uncharacterized protein (703 aa).

The signal sequence occupies residues 1 to 23 (MKQIMIFLTSFMLLAMTGQTALA). A helical membrane pass occupies residues 673 to 693 (MYIGVLALIMVVAAVFIWIAV).

It localises to the cell membrane. This is an uncharacterized protein from Bacillus subtilis (strain 168).